The chain runs to 193 residues: Oleosin S1-2 (193 aa).

Ala2 carries the post-translational modification N-acetylalanine. Positions Ala2–Ala39 are polar. A run of 3 helical transmembrane segments spans residues Val37–Thr57, Ile66–Ile86, and Gly87–Met107. Residues Val40–His113 form a hydrophobic region. The segment at Ala139–Thr193 is disordered. A compositionally biased stretch (basic and acidic residues) spans Arg142–Thr193.

Belongs to the oleosin family.

Its subcellular location is the lipid droplet. It is found in the membrane. May have a structural role to stabilize the lipid body during desiccation of the seed by preventing coalescence of the oil. Probably interacts with both lipid and phospholipid moieties of lipid bodies. May also provide recognition signals for specific lipase anchorage in lipolysis during seedling growth. The polypeptide is Oleosin S1-2 (S1) (Brassica napus (Rape)).